We begin with the raw amino-acid sequence, 3032 residues long: Biorientation of chromosomes in cell division protein 1-like 1 (3032 aa).

Residues 1–31 (MATNPQPQPPPPAPPPPPPQPQPPPPPPGPG) show a composition bias toward pro residues. 4 disordered regions span residues 1-48 (MATN…GAGD), 164-195 (EEAA…SANV), 214-397 (NAAR…LDSD), and 409-465 (VHTS…RGVR). Positions 32-46 (AGPGASGPGSAGAGA) are enriched in gly residues. Positions 234–243 (KLSSQPSTDV) are enriched in polar residues. Over residues 244-261 (STDKERGSEDATEREKAT) the composition is skewed to basic and acidic residues. Phosphoserine is present on Ser264. Basic and acidic residues predominate over residues 310 to 391 (TDPKIKSMDK…RAAEGTKEDC (82 aa)). The segment covering 416–441 (SFEEDTEEEVVVSESMEEGEITSEDE) has biased composition (acidic residues). Lys471 carries the N6-acetyllysine modification. Residues Ser480 and Ser482 each carry the phosphoserine modification. Disordered regions lie at residues 480 to 1153 (SDSD…HKAT), 1165 to 1296 (MVDS…HNSN), 1309 to 1366 (GGRA…LSED), 1424 to 1491 (AAGE…SGRR), 1675 to 1701 (GSLS…TEGT), 1740 to 1858 (AKPQ…GHAS), and 1934 to 1978 (ALAG…ISTG). Basic and acidic residues-rich tracts occupy residues 488 to 503 (VEQR…EERL) and 510 to 525 (REKL…EKTK). Residue Lys534 is modified to N6-acetyllysine. 2 stretches are compositionally biased toward basic and acidic residues: residues 547–568 (LEPK…EKKV) and 578–653 (SRNV…EYKR). Residues Ser632 and Ser656 each carry the phosphoserine modification. Thr657 bears the Phosphothreonine mark. Basic and acidic residues-rich tracts occupy residues 668–736 (TDTR…DKPS), 743–768 (GDSV…ESVR), and 799–846 (RDGK…KLQK). Residues 848-859 (ALSSKQHSVTSQ) are compositionally biased toward polar residues. Basic and acidic residues-rich tracts occupy residues 860–872 (KRSE…KCET), 934–960 (KPDK…RTSE), 978–1015 (AQKD…DGHR), and 1022–1069 (SNKD…ENRR). Phosphoserine is present on Ser1071. The segment covering 1086-1096 (MSGTTSSSSLQ) has biased composition (polar residues). The residue at position 1138 (Ser1138) is a Phosphoserine. A compositionally biased stretch (low complexity) spans 1272-1286 (STDSDLLSSSGSVTV). A compositionally biased stretch (polar residues) spans 1312–1329 (ASTSLANHSDVPNQYSTV). Ser1315 and Ser1364 each carry phosphoserine. Composition is skewed to basic and acidic residues over residues 1428–1470 (HVVD…RRDS) and 1479–1491 (GKME…SGRR). Phosphoserine occurs at positions 1676 and 1685. Positions 1958-1970 (HHSDSQLTRKETV) are enriched in basic and acidic residues. Phosphoserine occurs at positions 1989, 2001, 2092, and 2166. Residues 2082–2101 (PMPSAVSGENSQLTASRSEE) are disordered. Over residues 2088-2097 (SGENSQLTAS) the composition is skewed to polar residues. Disordered regions lie at residues 2303 to 2322 (EENQ…LATK), 2370 to 2469 (EPSV…HCLT), 2536 to 2559 (EGGL…EKMG), and 2575 to 2596 (DVTL…PPKG). Ser2417 and Ser2443 each carry phosphoserine. Over residues 2449-2459 (CLREPEQKPAE) the composition is skewed to basic and acidic residues. Position 2554 is a phosphoserine (Ser2554). Ser2681 carries the phosphoserine modification. Residues 2682 to 3032 (TEALSGCSVE…DENPLKKAKR (351 aa)) are disordered. Acidic residues-rich tracts occupy residues 2692-2701 (ADPEEVEEEE) and 2715-2725 (SSEEELDDSPD). Residues 2727-2750 (LDSRIETAQRQYSETEPHDTKEEN) show a composition bias toward basic and acidic residues. The segment covering 2758–2769 (SSVTSKTNSSTG) has biased composition (polar residues). Residues 2782-2804 (TGEKTEPNEDDGSIKSQEDDHPI) show a composition bias toward basic and acidic residues. The span at 2805–2815 (IIKRRRGRPRK) shows a compositional bias: basic residues. A DNA-binding region (a.T hook) is located at residues 2807–2819 (KRRRGRPRKYPAE). Basic and acidic residues predominate over residues 2822–2832 (FKSKEDSKTET). The segment covering 2833–2843 (DITTVEQSSPS) has biased composition (polar residues). 2 positions are modified to phosphoserine: Ser2840 and Ser2841. Residues 2853-2867 (ESNKEIANLEEKSTS) show a composition bias toward basic and acidic residues. Residue Ser2888 is modified to Phosphoserine. Residue Thr2890 is modified to Phosphothreonine. Ser2892, Ser2898, and Ser2907 each carry phosphoserine. Glycyl lysine isopeptide (Lys-Gly) (interchain with G-Cter in ubiquitin) cross-links involve residues Lys2915 and Lys2916. Residues 2919 to 2932 (ESDEEEEEEEEEEP) show a composition bias toward acidic residues. Ser2920 is modified (phosphoserine). Residues 2975-2987 (LAKEKLSTSEKVS) are compositionally biased toward basic and acidic residues. Ser3000 is modified (phosphoserine). The span at 3020-3032 (QKVDENPLKKAKR) shows a compositional bias: basic and acidic residues.

Belongs to the BOD1 family. In terms of assembly, interacts (via COMPASS-Shg1 domain) with SETD1A at stalled replication forks; this interaction mediates FANCD2-dependent nucleosome remodeling at reversed forks protecting them from nucleolytic degradation.

Its subcellular location is the chromosome. Functionally, component of the fork protection machinery required to protect stalled/damaged replication forks from uncontrolled DNA2-dependent resection. Acts by stabilizing RAD51 at stalled replication forks and protecting RAD51 nucleofilaments from the antirecombinogenic activities of FBH1 and BLM. Does not regulate spindle orientation. In Mus musculus (Mouse), this protein is Biorientation of chromosomes in cell division protein 1-like 1.